A 503-amino-acid chain; its full sequence is Probable DNA ligase (503 aa).

An ATP-binding site is contributed by Asp212. Residue Lys214 is the N6-AMP-lysine intermediate of the active site. Residues Arg219, Arg234, Glu263, Phe296, Arg368, and Lys374 each contribute to the ATP site.

It belongs to the ATP-dependent DNA ligase family. Requires Mg(2+) as cofactor.

It carries out the reaction ATP + (deoxyribonucleotide)n-3'-hydroxyl + 5'-phospho-(deoxyribonucleotide)m = (deoxyribonucleotide)n+m + AMP + diphosphate.. In terms of biological role, DNA ligase that seals nicks in double-stranded DNA during DNA replication, DNA recombination and DNA repair. This is Probable DNA ligase from Kineococcus radiotolerans (strain ATCC BAA-149 / DSM 14245 / SRS30216).